We begin with the raw amino-acid sequence, 487 residues long: GTPase Der (487 aa).

2 EngA-type G domains span residues 3–166 (PVIA…PRDA) and 193–366 (IKIA…KSAV). GTP is bound by residues 9-16 (GRPNVGKS), 56-60 (DTGGI), 118-121 (NKID), 199-206 (GRPNVGKS), 246-250 (DTAGV), and 311-314 (NKWD). One can recognise a KH-like domain in the interval 367–451 (TRWPTSRLTQ…PIRIEYKGGE (85 aa)). The segment covering 449 to 461 (GGENPFEGKKNTL) has biased composition (basic and acidic residues). A disordered region spans residues 449–487 (GGENPFEGKKNTLTDRQVNKKRRLMSHHKKAEKKRRDKR). Residues 467–487 (NKKRRLMSHHKKAEKKRRDKR) are compositionally biased toward basic residues.

The protein belongs to the TRAFAC class TrmE-Era-EngA-EngB-Septin-like GTPase superfamily. EngA (Der) GTPase family. As to quaternary structure, associates with the 50S ribosomal subunit.

GTPase that plays an essential role in the late steps of ribosome biogenesis. The sequence is that of GTPase Der from Pseudomonas putida (strain GB-1).